The following is a 214-amino-acid chain: MTTLADLRINYSRASLDEADAAPDPFAQFDRWFKEALAAKLPEPNTMTLATVGADGRPSARIVLIKGVDERGFVFFTNYESRKGHDLAVHPQAALLFYWIELERQVRIEGRIEKTSAEESDRYFASRPLGSRIGAWASEQSAVIDSRATLEAREKAVSERYGDNPPRPPHWGGYRLVPDSIEFWQGRPSRLHDRLLYTRDATAAPGWTISRLSP.

Substrate is bound by residues 8-11 (RINY) and K66. FMN-binding positions include 61-66 (RIVLIK), 76-77 (FT), R82, K83, and Q105. Substrate contacts are provided by Y123, R127, and S131. FMN-binding positions include 140-141 (QS) and W184. 190-192 (RLH) serves as a coordination point for substrate. FMN is bound at residue R194.

Belongs to the pyridoxamine 5'-phosphate oxidase family. In terms of assembly, homodimer. FMN is required as a cofactor.

It carries out the reaction pyridoxamine 5'-phosphate + O2 + H2O = pyridoxal 5'-phosphate + H2O2 + NH4(+). The enzyme catalyses pyridoxine 5'-phosphate + O2 = pyridoxal 5'-phosphate + H2O2. The protein operates within cofactor metabolism; pyridoxal 5'-phosphate salvage; pyridoxal 5'-phosphate from pyridoxamine 5'-phosphate: step 1/1. It functions in the pathway cofactor metabolism; pyridoxal 5'-phosphate salvage; pyridoxal 5'-phosphate from pyridoxine 5'-phosphate: step 1/1. In terms of biological role, catalyzes the oxidation of either pyridoxine 5'-phosphate (PNP) or pyridoxamine 5'-phosphate (PMP) into pyridoxal 5'-phosphate (PLP). The sequence is that of Pyridoxine/pyridoxamine 5'-phosphate oxidase from Burkholderia orbicola (strain MC0-3).